A 487-amino-acid polypeptide reads, in one-letter code: Glutamyl-tRNA(Gln) amidotransferase subunit A (487 aa).

Catalysis depends on charge relay system residues Lys76 and Ser151. Ser175 functions as the Acyl-ester intermediate in the catalytic mechanism.

This sequence belongs to the amidase family. GatA subfamily. In terms of assembly, heterotrimer of A, B and C subunits.

It catalyses the reaction L-glutamyl-tRNA(Gln) + L-glutamine + ATP + H2O = L-glutaminyl-tRNA(Gln) + L-glutamate + ADP + phosphate + H(+). Its function is as follows. Allows the formation of correctly charged Gln-tRNA(Gln) through the transamidation of misacylated Glu-tRNA(Gln) in organisms which lack glutaminyl-tRNA synthetase. The reaction takes place in the presence of glutamine and ATP through an activated gamma-phospho-Glu-tRNA(Gln). The protein is Glutamyl-tRNA(Gln) amidotransferase subunit A of Azoarcus sp. (strain BH72).